The sequence spans 716 residues: Protein C-mannosyl-transferase DPY19L3 (716 aa).

The Cytoplasmic segment spans residues M1–K43. The chain crosses the membrane as a helical span at residues I44–Y64. At L65 to E154 the chain is on the lumenal side. A glycan (N-linked (GlcNAc...) asparagine) is linked at N118. Residues P155–S182 form a helical membrane-spanning segment. Residues G183–T184 lie on the Cytoplasmic side of the membrane. An intramembrane region (name=3) is located at residues W185–T197. The Cytoplasmic portion of the chain corresponds to N198 to W215. Residues A216–F230 constitute an intramembrane region (name=4). Residues L231–S239 are Cytoplasmic-facing. Residues E240–L256 traverse the membrane as a helical segment. At T257–Q262 the chain is on the lumenal side. Residues F263–D279 traverse the membrane as a helical segment. Residues M280–L289 are Cytoplasmic-facing. A helical transmembrane segment spans residues Y290 to F306. The Lumenal segment spans residues N307–S308. A helical membrane pass occupies residues M309–F323. At I324–L338 the chain is on the cytoplasmic side. A helical membrane pass occupies residues N339–N359. Topologically, residues N360–D414 are lumenal. Residues T415 to F437 traverse the membrane as a helical segment. At H438 to Y465 the chain is on the cytoplasmic side. The helical transmembrane segment at N466–Y485 threads the bilayer. The Lumenal portion of the chain corresponds to L486–W487. Residues T488–L499 traverse the membrane as a helical segment. The Cytoplasmic segment spans residues C500–I522. Residues M523–F539 form a helical membrane-spanning segment. Residues W540–K716 lie on the Lumenal side of the membrane. The N-linked (GlcNAc...) asparagine glycan is linked to N704.

Belongs to the dpy-19 family.

The protein resides in the endoplasmic reticulum membrane. It catalyses the reaction L-tryptophyl-[protein] + a di-trans,poly-cis-dolichyl beta-D-mannosyl phosphate = C-alpha-D-mannosyl-L-tryptophyl-[protein] + a di-trans,poly-cis-dolichyl phosphate + H(+). The protein operates within protein modification; protein glycosylation. C-mannosyltransferase that mediates C-mannosylation of tryptophan residues on target proteins. The reaction occurs on the luminal side of the endoplasmic reticulum and involves the transfer of a mannose unit from a dolichylphosphate mannose (Dol-P-Man) donor to an acceptor protein containing a WxxW or WxxC consensus sequence. C-mannosylates RSPO1, a Wnt signaling regulator, preferentially at the first Trp residue in the sequence WxxW. C-mannosylates the netrin receptor UNC5A, preferentially at the third tryptophan of WxxWxxWxxC sequence. The sequence is that of Protein C-mannosyl-transferase DPY19L3 (DPY19L3) from Pongo abelii (Sumatran orangutan).